Reading from the N-terminus, the 294-residue chain is Extracellular metalloprotease TRV_07111 (294 aa).

An N-terminal signal peptide occupies residues 1–19 (MRFSVVFAAIAALSSVVTA). 3 N-linked (GlcNAc...) asparagine glycosylation sites follow: asparagine 49, asparagine 54, and asparagine 74. Residue histidine 185 participates in Zn(2+) binding. Residue glutamate 186 is part of the active site. A Zn(2+)-binding site is contributed by histidine 189. The cysteines at positions 224 and 250 are disulfide-linked.

The protein belongs to the peptidase M43B family.

The protein resides in the secreted. Secreted metalloproteinase that allows assimilation of proteinaceous substrates. Plays a pivotal role as a pathogenicity determinant during infections and contributes to the ability of the pathogen to persist within the mammalian host. The chain is Extracellular metalloprotease TRV_07111 from Trichophyton verrucosum (strain HKI 0517).